We begin with the raw amino-acid sequence, 312 residues long: Deoxyribonuclease-1-like 1 (312 aa).

The signal sequence occupies residues 1-35; sequence MPSGQPVFPRRVPDAYIAMRGLVVASLLILLVGGT. Asn-102 is a glycosylation site (N-linked (GlcNAc...) asparagine). Glu-113 is an active-site residue. Asn-133 carries N-linked (GlcNAc...) asparagine glycosylation. Residue His-164 is part of the active site. An intrachain disulfide couples Cys-203 to Cys-240. Asn-239 carries an N-linked (GlcNAc...) asparagine glycan.

The protein belongs to the DNase I family.

It is found in the endoplasmic reticulum. In Rattus norvegicus (Rat), this protein is Deoxyribonuclease-1-like 1 (Dnase1l1).